The sequence spans 317 residues: Lipoyl synthase (317 aa).

Positions 59, 64, 70, 85, 89, 92, and 298 each coordinate [4Fe-4S] cluster. In terms of domain architecture, Radical SAM core spans 71–287 (WSQRHASFMI…AKIGKAKGFL (217 aa)).

This sequence belongs to the radical SAM superfamily. Lipoyl synthase family. It depends on [4Fe-4S] cluster as a cofactor.

The protein resides in the cytoplasm. It catalyses the reaction [[Fe-S] cluster scaffold protein carrying a second [4Fe-4S](2+) cluster] + N(6)-octanoyl-L-lysyl-[protein] + 2 oxidized [2Fe-2S]-[ferredoxin] + 2 S-adenosyl-L-methionine + 4 H(+) = [[Fe-S] cluster scaffold protein] + N(6)-[(R)-dihydrolipoyl]-L-lysyl-[protein] + 4 Fe(3+) + 2 hydrogen sulfide + 2 5'-deoxyadenosine + 2 L-methionine + 2 reduced [2Fe-2S]-[ferredoxin]. The protein operates within protein modification; protein lipoylation via endogenous pathway; protein N(6)-(lipoyl)lysine from octanoyl-[acyl-carrier-protein]: step 2/2. Functionally, catalyzes the radical-mediated insertion of two sulfur atoms into the C-6 and C-8 positions of the octanoyl moiety bound to the lipoyl domains of lipoate-dependent enzymes, thereby converting the octanoylated domains into lipoylated derivatives. The polypeptide is Lipoyl synthase (Bartonella bacilliformis (strain ATCC 35685 / KC583 / Herrer 020/F12,63)).